The sequence spans 143 residues: Putative pre-16S rRNA nuclease (143 aa).

It belongs to the YqgF nuclease family.

Its subcellular location is the cytoplasm. Could be a nuclease involved in processing of the 5'-end of pre-16S rRNA. The protein is Putative pre-16S rRNA nuclease of Lactococcus lactis subsp. cremoris (strain MG1363).